A 344-amino-acid chain; its full sequence is Sesquiterpene synthase 9 (344 aa).

The Mg(2+) site is built by Asp88, Asn224, Ser228, and Glu232. A DDXXD motif motif is present at residues 88 to 92 (DEYSD). Residues 224–232 (NDMLSWNVE) carry the NSE/DTE motif motif. Residues Arg313 and Tyr314 each coordinate (2E,6E)-farnesyl diphosphate.

The protein belongs to the terpene synthase family. Mg(2+) serves as cofactor.

Its function is as follows. Terpene cyclase that catalyzes the cyclization of farnesyl diphosphate (FPP) to a single major sesquiterpene scaffold whose chemical structure is still unknown. This chain is Sesquiterpene synthase 9, found in Postia placenta (strain ATCC 44394 / Madison 698-R) (Brown rot fungus).